The chain runs to 142 residues: Large ribosomal subunit protein uL11 (142 aa).

This sequence belongs to the universal ribosomal protein uL11 family. As to quaternary structure, part of the ribosomal stalk of the 50S ribosomal subunit. Interacts with L10 and the large rRNA to form the base of the stalk. L10 forms an elongated spine to which L12 dimers bind in a sequential fashion forming a multimeric L10(L12)X complex. In terms of processing, one or more lysine residues are methylated.

Forms part of the ribosomal stalk which helps the ribosome interact with GTP-bound translation factors. This is Large ribosomal subunit protein uL11 from Parvibaculum lavamentivorans (strain DS-1 / DSM 13023 / NCIMB 13966).